The sequence spans 738 residues: Cleavage and polyadenylation specificity factor subunit 2 (738 aa).

Belongs to the metallo-beta-lactamase superfamily. RNA-metabolizing metallo-beta-lactamase-like family. CPSF2/YSH1 subfamily. In terms of assembly, CPSF is a heterotetramer composed of four distinct subunits 160, 100, 70 and 30 kDa.

It localises to the nucleus. Its function is as follows. CPSF plays a key role in pre-mRNA 3'-end formation, recognizing the AAUAAA signal sequence and interacting with poly(A)polymerase and other factors to bring about cleavage and poly(A) addition. The chain is Cleavage and polyadenylation specificity factor subunit 2 from Oryza sativa subsp. japonica (Rice).